Reading from the N-terminus, the 381-residue chain is Succinyl-diaminopimelate desuccinylase (381 aa).

Histidine 70 serves as a coordination point for Zn(2+). The active site involves aspartate 72. Aspartate 103 contributes to the Zn(2+) binding site. The active-site Proton acceptor is glutamate 136. The Zn(2+) site is built by glutamate 137, glutamate 165, and histidine 354.

Belongs to the peptidase M20A family. DapE subfamily. In terms of assembly, homodimer. The cofactor is Zn(2+). It depends on Co(2+) as a cofactor.

The enzyme catalyses N-succinyl-(2S,6S)-2,6-diaminopimelate + H2O = (2S,6S)-2,6-diaminopimelate + succinate. Its pathway is amino-acid biosynthesis; L-lysine biosynthesis via DAP pathway; LL-2,6-diaminopimelate from (S)-tetrahydrodipicolinate (succinylase route): step 3/3. Catalyzes the hydrolysis of N-succinyl-L,L-diaminopimelic acid (SDAP), forming succinate and LL-2,6-diaminopimelate (DAP), an intermediate involved in the bacterial biosynthesis of lysine and meso-diaminopimelic acid, an essential component of bacterial cell walls. The polypeptide is Succinyl-diaminopimelate desuccinylase (Roseobacter denitrificans (strain ATCC 33942 / OCh 114) (Erythrobacter sp. (strain OCh 114))).